Here is a 309-residue protein sequence, read N- to C-terminus: Homoserine kinase (309 aa).

P91–C101 is an ATP binding site.

Belongs to the GHMP kinase family. Homoserine kinase subfamily.

It is found in the cytoplasm. The enzyme catalyses L-homoserine + ATP = O-phospho-L-homoserine + ADP + H(+). It functions in the pathway amino-acid biosynthesis; L-threonine biosynthesis; L-threonine from L-aspartate: step 4/5. Functionally, catalyzes the ATP-dependent phosphorylation of L-homoserine to L-homoserine phosphate. This is Homoserine kinase from Salmonella dublin (strain CT_02021853).